The following is a 448-amino-acid chain: Argininosuccinate synthase (448 aa).

Residues 17–25 and alanine 43 contribute to the ATP site; that span reads AFSGGLDTS. Tyrosine 99 lines the L-citrulline pocket. ATP contacts are provided by glycine 129 and threonine 131. L-aspartate-binding residues include threonine 131, asparagine 135, and aspartate 136. An L-citrulline-binding site is contributed by asparagine 135. Residue aspartate 136 participates in ATP binding. The L-citrulline site is built by arginine 139 and serine 192. Aspartate 194 is an ATP binding site. Threonine 201, glutamate 203, and glutamate 280 together coordinate L-citrulline.

This sequence belongs to the argininosuccinate synthase family. Type 2 subfamily. Homotetramer.

Its subcellular location is the cytoplasm. The enzyme catalyses L-citrulline + L-aspartate + ATP = 2-(N(omega)-L-arginino)succinate + AMP + diphosphate + H(+). The protein operates within amino-acid biosynthesis; L-arginine biosynthesis; L-arginine from L-ornithine and carbamoyl phosphate: step 2/3. The sequence is that of Argininosuccinate synthase from Enterobacter sp. (strain 638).